The following is a 761-amino-acid chain: Prolyl oligopeptidase A (761 aa).

Active-site charge relay system residues include Ser606, Asp690, and His726.

Belongs to the peptidase S9A family. As to quaternary structure, monomer.

The enzyme catalyses Hydrolysis of Pro-|-Xaa &gt;&gt; Ala-|-Xaa in oligopeptides.. Its function is as follows. Housekeeping prolyl oligopeptidase (POP) that behaves like a conventional POP by cleaving peptide bonds on the C-terminal side of prolyl residues within peptides that are up to approximately 30 amino acids long. The chain is Prolyl oligopeptidase A from Amanita bisporigera (Destroying angel).